We begin with the raw amino-acid sequence, 577 residues long: E3 ubiquitin-protein ligase MSL2 (577 aa).

Residues 1–116 form a sufficient for interaction with MSL1 region; that stretch reads MNPVNATALY…CEYITQTTLA (116 aa). Residues C44, C47, C62, H64, C67, C70, C81, and C84 each coordinate Zn(2+). Residues 44 to 85 form an RING-type zinc finger; the sequence is CCVCGHLLQDPIAPTNSTCQHYVCKTCKGKKMMMKPSCSWCK. K375 is covalently cross-linked (Glycyl lysine isopeptide (Lys-Gly) (interchain with G-Cter in SUMO2)). A disordered region spans residues 405–428; that stretch reads TKSMKKSHEHGSKKSHSKSKPGIL. The span at 407–423 shows a compositional bias: basic residues; sequence SMKKSHEHGSKKSHSKS. At S447 the chain carries Phosphoserine. The region spanning 457-508 is the CXC MSL2-type domain; the sequence is QEKKGCKCGRATQNPSVLTCRGQRCPCYSNRKACLDCICRGCQNSYMANGEK. Residues C462, C464, C476, C481, C483, C490, C493, C495, and C498 each contribute to the Zn(2+) site.

This sequence belongs to the MSL2 family. Component of a multisubunit histone acetyltransferase complex (MSL) at least composed of the KAT8/MOF/MYST1, MSL1/hampin, MSL2 and MSL3. Forms a MSL heterotetrameric core with MSL1.

It is found in the nucleus. Its subcellular location is the chromosome. It catalyses the reaction S-ubiquitinyl-[E2 ubiquitin-conjugating enzyme]-L-cysteine + [acceptor protein]-L-lysine = [E2 ubiquitin-conjugating enzyme]-L-cysteine + N(6)-ubiquitinyl-[acceptor protein]-L-lysine.. The protein operates within protein modification; protein ubiquitination. Its function is as follows. Non-catalytic component of the MSL histone acetyltransferase complex, a multiprotein complex that mediates the majority of histone H4 acetylation at 'Lys-16' (H4K16ac), an epigenetic mark that prevents chromatin compaction. The MSL complex is required for chromosome stability and genome integrity by maintaining homeostatic levels of H4K16ac. The MSL complex is also involved in gene dosage by promoting up-regulation of genes expressed by the X chromosome. X up-regulation is required to compensate for autosomal biallelic expression. The MSL complex also participates in gene dosage compensation by promoting expression of Tsix non-coding RNA. MSL2 plays a key role in gene dosage by ensuring biallelic expression of a subset of dosage-sensitive genes, including many haploinsufficient genes. Acts by promoting promoter-enhancer contacts, thereby preventing DNA methylation of one allele and creating a methylation-free environment for methylation-sensitive transcription factors such as SP1, KANSL1 and KANSL3. Also acts as an E3 ubiquitin ligase that promotes monoubiquitination of histone H2B at 'Lys-35' (H2BK34Ub), but not that of H2A. This activity is greatly enhanced by heterodimerization with MSL1. H2B ubiquitination in turn stimulates histone H3 methylation at 'Lys-4' (H3K4me) and 'Lys-79' (H3K79me) and leads to gene activation, including that of HOXA9 and MEIS1. In Mus musculus (Mouse), this protein is E3 ubiquitin-protein ligase MSL2.